A 352-amino-acid polypeptide reads, in one-letter code: Quinolinate synthase (352 aa).

Residues histidine 48 and serine 69 each contribute to the iminosuccinate site. Cysteine 114 is a binding site for [4Fe-4S] cluster. Residues 140–142 and serine 157 each bind iminosuccinate; that span reads YAN. [4Fe-4S] cluster is bound at residue cysteine 201. Residues 227–229 and threonine 244 each bind iminosuccinate; that span reads HPE. Position 298 (cysteine 298) interacts with [4Fe-4S] cluster.

Belongs to the quinolinate synthase family. Type 1 subfamily. [4Fe-4S] cluster serves as cofactor.

The protein resides in the cytoplasm. The catalysed reaction is iminosuccinate + dihydroxyacetone phosphate = quinolinate + phosphate + 2 H2O + H(+). The protein operates within cofactor biosynthesis; NAD(+) biosynthesis; quinolinate from iminoaspartate: step 1/1. In terms of biological role, catalyzes the condensation of iminoaspartate with dihydroxyacetone phosphate to form quinolinate. This Ectopseudomonas mendocina (strain ymp) (Pseudomonas mendocina) protein is Quinolinate synthase.